We begin with the raw amino-acid sequence, 421 residues long: Cytochrome c biogenesis protein Ccs1 (421 aa).

Transmembrane regions (helical) follow at residues 12–32 (LRFA…GTVI), 71–91 (TWWF…CTIL), and 157–177 (IAPI…IFGA).

The protein belongs to the Ccs1/CcsB family. As to quaternary structure, may interact with CcsA.

The protein localises to the plastid. Its subcellular location is the chloroplast thylakoid membrane. Required during biogenesis of c-type cytochromes (cytochrome c6 and cytochrome f) at the step of heme attachment. The protein is Cytochrome c biogenesis protein Ccs1 of Trieres chinensis (Marine centric diatom).